Here is a 395-residue protein sequence, read N- to C-terminus: Elongation factor Tu (395 aa).

The tr-type G domain maps to 10 to 204; sequence KPHVNIGTIG…AVDEYIPTPQ (195 aa). The tract at residues 19–26 is G1; it reads GHVDHGKT. 19–26 contacts GTP; it reads GHVDHGKT. Mg(2+) is bound at residue threonine 26. The interval 60–64 is G2; sequence GITIS. The G3 stretch occupies residues 81–84; sequence DCPG. GTP-binding positions include 81-85 and 136-139; these read DCPGH and NKCD. The G4 stretch occupies residues 136-139; it reads NKCD. Positions 174–176 are G5; that stretch reads SAL.

Belongs to the TRAFAC class translation factor GTPase superfamily. Classic translation factor GTPase family. EF-Tu/EF-1A subfamily. In terms of assembly, monomer.

It localises to the cytoplasm. It catalyses the reaction GTP + H2O = GDP + phosphate + H(+). In terms of biological role, GTP hydrolase that promotes the GTP-dependent binding of aminoacyl-tRNA to the A-site of ribosomes during protein biosynthesis. The chain is Elongation factor Tu from Anoxybacillus flavithermus (strain DSM 21510 / WK1).